A 313-amino-acid polypeptide reads, in one-letter code: Proline iminopeptidase (313 aa).

In terms of domain architecture, AB hydrolase-1 spans 35–298; that stretch reads KPVVMLHGGP…SPASGHSAFE (264 aa). Residue Ser110 is the Nucleophile of the active site. Residue Asp266 is part of the active site. The active-site Proton donor is His294.

This sequence belongs to the peptidase S33 family. Homooligomer.

It localises to the cytoplasm. The catalysed reaction is Release of N-terminal proline from a peptide.. Its function is as follows. May be involved in proline metabolism and sensitivity to ascamycin. Has ascamycin dealanylating activity. The polypeptide is Proline iminopeptidase (pip) (Xanthomonas citri (Xanthomonas campestris pv. citri)).